The sequence spans 156 residues: uncharacterized protein (156 aa).

The signal sequence occupies residues 1–18 (MKKLLSIFLMAFSLNAFA). In terms of domain architecture, Thioredoxin spans 19 to 156 (QTNLADVQLK…AEQIRVFAEK (138 aa)). Cysteine 54 and cysteine 57 form a disulfide bridge.

It belongs to the thioredoxin family.

This is an uncharacterized protein from Haemophilus influenzae (strain ATCC 51907 / DSM 11121 / KW20 / Rd).